We begin with the raw amino-acid sequence, 166 residues long: Large ribosomal subunit protein uL10 (166 aa).

This sequence belongs to the universal ribosomal protein uL10 family. In terms of assembly, part of the ribosomal stalk of the 50S ribosomal subunit. The N-terminus interacts with L11 and the large rRNA to form the base of the stalk. The C-terminus forms an elongated spine to which L12 dimers bind in a sequential fashion forming a multimeric L10(L12)X complex.

In terms of biological role, forms part of the ribosomal stalk, playing a central role in the interaction of the ribosome with GTP-bound translation factors. This Shewanella amazonensis (strain ATCC BAA-1098 / SB2B) protein is Large ribosomal subunit protein uL10.